Reading from the N-terminus, the 140-residue chain is Large ribosomal subunit protein uL11 (140 aa).

This sequence belongs to the universal ribosomal protein uL11 family. Part of the ribosomal stalk of the 50S ribosomal subunit. Interacts with L10 and the large rRNA to form the base of the stalk. L10 forms an elongated spine to which L12 dimers bind in a sequential fashion forming a multimeric L10(L12)X complex. One or more lysine residues are methylated.

Functionally, forms part of the ribosomal stalk which helps the ribosome interact with GTP-bound translation factors. The chain is Large ribosomal subunit protein uL11 from Staphylococcus epidermidis (strain ATCC 35984 / DSM 28319 / BCRC 17069 / CCUG 31568 / BM 3577 / RP62A).